Consider the following 294-residue polypeptide: Acetyl-coenzyme A carboxylase carboxyl transferase subunit beta (294 aa).

Positions 30–294 (IMTKCPECKK…PETGGESDGE (265 aa)) constitute a CoA carboxyltransferase N-terminal domain. Residues cysteine 34, cysteine 37, cysteine 53, and cysteine 56 each coordinate Zn(2+). The C4-type zinc-finger motif lies at 34–56 (CPECKKIMYTKELQKNLMVCNYC).

Belongs to the AccD/PCCB family. In terms of assembly, acetyl-CoA carboxylase is a heterohexamer composed of biotin carboxyl carrier protein (AccB), biotin carboxylase (AccC) and two subunits each of ACCase subunit alpha (AccA) and ACCase subunit beta (AccD). Zn(2+) is required as a cofactor.

The protein localises to the cytoplasm. The enzyme catalyses N(6)-carboxybiotinyl-L-lysyl-[protein] + acetyl-CoA = N(6)-biotinyl-L-lysyl-[protein] + malonyl-CoA. Its pathway is lipid metabolism; malonyl-CoA biosynthesis; malonyl-CoA from acetyl-CoA: step 1/1. Functionally, component of the acetyl coenzyme A carboxylase (ACC) complex. Biotin carboxylase (BC) catalyzes the carboxylation of biotin on its carrier protein (BCCP) and then the CO(2) group is transferred by the transcarboxylase to acetyl-CoA to form malonyl-CoA. The protein is Acetyl-coenzyme A carboxylase carboxyl transferase subunit beta of Listeria welshimeri serovar 6b (strain ATCC 35897 / DSM 20650 / CCUG 15529 / CIP 8149 / NCTC 11857 / SLCC 5334 / V8).